The following is a 182-amino-acid chain: Transmembrane and coiled-coil domain-containing protein 2 (182 aa).

2 consecutive transmembrane segments (helical) span residues 10–30 (IIIDYLSLSSIWNYLQATLLG) and 50–70 (VQVILGISFLILLGVGMYALW). The stretch at 122-149 (GLQEKILKKLQTVENKVKDLEGMIISQK) forms a coiled coil.

The protein resides in the membrane. The polypeptide is Transmembrane and coiled-coil domain-containing protein 2 (TMCO2) (Bos taurus (Bovine)).